Reading from the N-terminus, the 31-residue chain is MLTITSYFGFLLAALTITPALFISLNKIRLI.

The chain crosses the membrane as a helical span at residues 3–23 (TITSYFGFLLAALTITPALFI).

It belongs to the PetL family. In terms of assembly, the 4 large subunits of the cytochrome b6-f complex are cytochrome b6, subunit IV (17 kDa polypeptide, PetD), cytochrome f and the Rieske protein, while the 4 small subunits are PetG, PetL, PetM and PetN. The complex functions as a dimer.

The protein resides in the plastid. The protein localises to the chloroplast thylakoid membrane. Functionally, component of the cytochrome b6-f complex, which mediates electron transfer between photosystem II (PSII) and photosystem I (PSI), cyclic electron flow around PSI, and state transitions. PetL is important for photoautotrophic growth as well as for electron transfer efficiency and stability of the cytochrome b6-f complex. In Zea mays (Maize), this protein is Cytochrome b6-f complex subunit 6.